The chain runs to 76 residues: Zinc finger protein 706 (76 aa).

The span at 1–13 (MARGQQKIQSQQK) shows a compositional bias: low complexity. 2 disordered regions span residues 1 to 32 (MARGQQKIQSQQKNAKKQAEQKKKQGHDQKAA) and 53 to 76 (TFKQHFESKHPKTPLPPELADVQA). Composition is skewed to basic and acidic residues over residues 17 to 31 (KQAEQKKKQGHDQKA) and 53 to 62 (TFKQHFESKH). The segment at 39-62 (YTCTVCRTQMPDPKTFKQHFESKH) adopts a C2H2-type zinc-finger fold.

It is found in the cytoplasm. The protein localises to the nucleus. Functionally, transcription repressor involved in the exit of embryonic stem cells (ESCs) from self-renewal. The polypeptide is Zinc finger protein 706 (Gallus gallus (Chicken)).